A 544-amino-acid polypeptide reads, in one-letter code: Chaperonin GroEL (544 aa).

ATP-binding positions include 30-33 (TLGP), lysine 51, 87-91 (DGTTT), glycine 415, and aspartate 495.

Belongs to the chaperonin (HSP60) family. As to quaternary structure, forms a cylinder of 14 subunits composed of two heptameric rings stacked back-to-back. Interacts with the co-chaperonin GroES.

The protein resides in the cytoplasm. The enzyme catalyses ATP + H2O + a folded polypeptide = ADP + phosphate + an unfolded polypeptide.. Together with its co-chaperonin GroES, plays an essential role in assisting protein folding. The GroEL-GroES system forms a nano-cage that allows encapsulation of the non-native substrate proteins and provides a physical environment optimized to promote and accelerate protein folding. This chain is Chaperonin GroEL, found in Agrobacterium fabrum (strain C58 / ATCC 33970) (Agrobacterium tumefaciens (strain C58)).